Here is a 299-residue protein sequence, read N- to C-terminus: MMENSTTEARNEATMHLDEMTVEEALITMNKEDQQVPLAVQKAIPQLTKVIKKTIAQYKKGGRLIYIGAGTSGRLGVLDAAECVPTFNTDPHEIIGIIAGGQHAMTMAVEGAEDHKKLAEEDLKNIDLTSKDVVIGIAASGKTPYVIGGLTFANTIGATTVSISCNEHAVISEIAQYPVEVKVGPEVLTGSTRLKSGTAQKLILNMISTITMVGVGKVYDNLMIDVKATNQKLIDRSVRIIQEICAITYDEAMALYQVSEHDVKVATVMGMCGISKEEATRRLLNNGDIVKRAIRDRQP.

In terms of domain architecture, SIS spans threonine 54 to lysine 217. The active-site Proton donor is the glutamate 82. Glutamate 113 is an active-site residue.

It belongs to the GCKR-like family. MurNAc-6-P etherase subfamily. In terms of assembly, homodimer.

The catalysed reaction is N-acetyl-D-muramate 6-phosphate + H2O = N-acetyl-D-glucosamine 6-phosphate + (R)-lactate. It functions in the pathway amino-sugar metabolism; N-acetylmuramate degradation. Specifically catalyzes the cleavage of the D-lactyl ether substituent of MurNAc 6-phosphate, producing GlcNAc 6-phosphate and D-lactate. The chain is N-acetylmuramic acid 6-phosphate etherase from Staphylococcus aureus (strain bovine RF122 / ET3-1).